Consider the following 409-residue polypeptide: Protein naked cuticle homolog 2-like (409 aa).

The N-myristoyl glycine moiety is linked to residue Gly-2. Residues Ala-109–Val-144 enclose the EF-hand domain. Ca(2+) is bound by residues Asp-122, Asp-124, Ser-126, Lys-128, and Asp-133. 4 disordered regions span residues Val-166 to Asp-224, Thr-243 to Gly-315, Asn-346 to Arg-367, and Arg-388 to Thr-409. Basic and acidic residues-rich tracts occupy residues Ala-171–Ser-185 and Val-193–Asp-224. Over residues Asp-247–Pro-268 the composition is skewed to low complexity. Over residues His-389 to Thr-409 the composition is skewed to basic residues.

It belongs to the NKD family.

The protein resides in the cell membrane. It localises to the cytoplasm. Cell autonomous antagonist of both the canonical and non-canonical Wnt signaling pathways. The protein is Protein naked cuticle homolog 2-like (nkd2l) of Danio rerio (Zebrafish).